A 181-amino-acid polypeptide reads, in one-letter code: Oligoribonuclease (181 aa).

Residues 8 to 171 form the Exonuclease domain; the sequence is LIWIDLEMTG…DDIRESVAEL (164 aa). Tyrosine 129 is an active-site residue.

The protein belongs to the oligoribonuclease family.

The protein resides in the cytoplasm. 3'-to-5' exoribonuclease specific for small oligoribonucleotides. In Shigella flexneri, this protein is Oligoribonuclease.